Consider the following 437-residue polypeptide: Transmembrane protein with metallophosphoesterase domain (437 aa).

Helical transmembrane passes span 7–27 (LSAEGKVGIASGVVFFSMLIS), 41–61 (ALLFRVQFLLFINSLLLLGSL), 87–107 (IIVLLFLALVHGSYLCMFFLV), 116–136 (LLSFSCLGVYVILLFFLFVFG), and 164–184 (VLALIITAVLAVYGLVNAAQP). A divalent metal cation is bound by residues D211, H213, D243, N274, H376, and H378.

The protein belongs to the metallophosphoesterase superfamily. LOC643853 family. The cofactor is a divalent metal cation.

It localises to the membrane. In Danio rerio (Zebrafish), this protein is Transmembrane protein with metallophosphoesterase domain (tmppe).